Here is a 237-residue protein sequence, read N- to C-terminus: Orotidine 5'-phosphate decarboxylase (237 aa).

Substrate-binding positions include Asp10, Lys33, 60–69, Thr124, Arg186, Gln195, Gly215, and Arg216; that span reads DLKLHDIPNT. Residue Lys62 is the Proton donor of the active site.

This sequence belongs to the OMP decarboxylase family. Type 1 subfamily. Homodimer.

It carries out the reaction orotidine 5'-phosphate + H(+) = UMP + CO2. The protein operates within pyrimidine metabolism; UMP biosynthesis via de novo pathway; UMP from orotate: step 2/2. Catalyzes the decarboxylation of orotidine 5'-monophosphate (OMP) to uridine 5'-monophosphate (UMP). The chain is Orotidine 5'-phosphate decarboxylase from Lactiplantibacillus plantarum (strain ATCC BAA-793 / NCIMB 8826 / WCFS1) (Lactobacillus plantarum).